We begin with the raw amino-acid sequence, 472 residues long: 3-isopropylmalate dehydratase large subunit (472 aa).

Residues C347, C407, and C410 each coordinate [4Fe-4S] cluster.

It belongs to the aconitase/IPM isomerase family. LeuC type 1 subfamily. In terms of assembly, heterodimer of LeuC and LeuD. [4Fe-4S] cluster is required as a cofactor.

The catalysed reaction is (2R,3S)-3-isopropylmalate = (2S)-2-isopropylmalate. The protein operates within amino-acid biosynthesis; L-leucine biosynthesis; L-leucine from 3-methyl-2-oxobutanoate: step 2/4. Functionally, catalyzes the isomerization between 2-isopropylmalate and 3-isopropylmalate, via the formation of 2-isopropylmaleate. The sequence is that of 3-isopropylmalate dehydratase large subunit from Synechococcus sp. (strain CC9902).